The primary structure comprises 550 residues: Integral membrane protein DGCR2/IDD (550 aa).

Positions 1–20 (MVPKADSGAFLLLFLLVLTV) are cleaved as a signal peptide. Residues 21–349 (TEPLRPELRC…LFDSMASGMR (329 aa)) are Extracellular-facing. Residues 28–68 (LRCNPGQFACRSGTIQCIPLPWQCDGWATCEDESDEANCPE) form the LDL-receptor class A domain. 3 disulfides stabilise this stretch: C30–C44, C37–C57, and C51–C66. The disordered stretch occupies residues 69–92 (VTGEVRPHHGKEAVDPRQGRARGG). Residues 71–92 (GEVRPHHGKEAVDPRQGRARGG) show a composition bias toward basic and acidic residues. The C-type lectin domain occupies 115–241 (CPTGWHHYEG…FCAQLQCFHF (127 aa)). 2 cysteine pairs are disulfide-bonded: C145/C265 and C233/C257. Residues N149 and N196 are each glycosylated (N-linked (GlcNAc...) asparagine). In terms of domain architecture, VWFC spans 270-333 (TCVDIKDNVV…PKECCKFMCL (64 aa)). The helical transmembrane segment at 350–368 (LVVSCISSFLILSLLLFMV) threads the bilayer. Over 369 to 550 (HRLRQRRRER…HSRSSLNTVV (182 aa)) the chain is Cytoplasmic. S381 carries the post-translational modification Phosphoserine. Residues 500 to 550 (AGASLADLEDSADSSSALLVPPDPAQSGSTPAAEALPGGGRHSRSSLNTVV) are disordered.

As to expression, predominantly expressed in brain, heart, lung and fetal kidney. Low levels in liver and adult kidney.

It is found in the membrane. Its function is as follows. Putative adhesion receptor, that could be involved in cell-cell or cell-matrix interactions required for normal cell differentiation and migration. The polypeptide is Integral membrane protein DGCR2/IDD (DGCR2) (Homo sapiens (Human)).